Consider the following 335-residue polypeptide: Lipase chaperone (335 aa).

Residues 7-23 traverse the membrane as a helical segment; that stretch reads LLPLAIALGLGFFIARP.

The protein belongs to the lipase chaperone family.

Its subcellular location is the cell inner membrane. Its function is as follows. May be involved in the folding of the extracellular lipase during its passage through the periplasm. The sequence is that of Lipase chaperone (lifO) from Ectopseudomonas mendocina (Pseudomonas mendocina).